Reading from the N-terminus, the 95-residue chain is Co-chaperonin GroES (95 aa).

The protein belongs to the GroES chaperonin family. Heptamer of 7 subunits arranged in a ring. Interacts with the chaperonin GroEL.

The protein resides in the cytoplasm. Its function is as follows. Together with the chaperonin GroEL, plays an essential role in assisting protein folding. The GroEL-GroES system forms a nano-cage that allows encapsulation of the non-native substrate proteins and provides a physical environment optimized to promote and accelerate protein folding. GroES binds to the apical surface of the GroEL ring, thereby capping the opening of the GroEL channel. This is Co-chaperonin GroES from Neisseria meningitidis serogroup C (strain 053442).